The following is a 262-amino-acid chain: Nurim (262 aa).

Residues 1 to 4 are Nuclear-facing; sequence MAPA. Residues 5-28 form a helical membrane-spanning segment; sequence LLLVPAALASFILAFGTGVEFVRF. Topologically, residues 29–58 are perinuclear space; sequence TSLRPLLGGIPESGGPDARHGWLAALQDRS. The chain crosses the membrane as a helical span at residues 59-80; that stretch reads ILASLAWDLCLLLLFVVQHSLM. Topologically, residues 81-97 are nuclear; that stretch reads ATEAVKAWTSRYFGVLQ. A helical membrane pass occupies residues 98–114; the sequence is RSLYVACTALALQLVMR. The Perinuclear space portion of the chain corresponds to 115-133; sequence YWETTPRGPVLWEARAEPW. Residues 134–164 form a helical membrane-spanning segment; it reads ATWVPLLCFVLHVVSWLLIFSILLVFDYAEL. The Nuclear segment spans residues 165–191; the sequence is MGLKQVYYHVLGLGEPLSLKSPRALRL. The chain crosses the membrane as a helical span at residues 192-210; that stretch reads FSHLRHPVCVELLTVLWVV. At 211–216 the chain is on the perinuclear space side; sequence PTLGTD. The chain crosses the membrane as a helical span at residues 217–234; the sequence is RLLLALLFTLYLGLAHGL. Topologically, residues 235 to 262 are nuclear; it reads DQQDLRYLRSQLQRKLHLLSRPQDGEAE.

This sequence belongs to the nurim family.

It is found in the nucleus inner membrane. The protein is Nurim (Nrm) of Mus musculus (Mouse).